The sequence spans 217 residues: Dihydroflavonol 4-reductase (217 aa).

2 residues coordinate NADP(+): K27 and Y146.

This sequence belongs to the NAD(P)-dependent epimerase/dehydratase family. Dihydroflavonol-4-reductase subfamily.

It catalyses the reaction a (2R,3S,4S)-leucoanthocyanidin + NADP(+) = a (2R,3R)-dihydroflavonol + NADPH + H(+). It carries out the reaction (2S)-flavan-4-ol + NADP(+) = (2S)-flavanone + NADPH + H(+). It participates in pigment biosynthesis; anthocyanin biosynthesis. Its function is as follows. Bifunctional enzyme involved in flavonoid metabolism. The polypeptide is Dihydroflavonol 4-reductase (DFR1) (Medicago sativa (Alfalfa)).